Here is a 946-residue protein sequence, read N- to C-terminus: Inositol-trisphosphate 3-kinase B (946 aa).

Disordered stretches follow at residues 19–128 (EMKS…EEAK), 156–288 (AQSS…TRSC), 308–472 (ARVT…GIPS), 486–561 (KDLK…RKAC), and 580–638 (GALE…HTLD). S43, S49, and S71 each carry phosphoserine. Residues 83-105 (NSSSGSGSGSSGSSVSSPSWAGR) are compositionally biased toward low complexity. S204 and S269 each carry phosphoserine. Positions 396–411 (TTVSVQSAESSDSLSW) are enriched in polar residues. Over residues 445–458 (GGSPTLGLLGGSPS) the composition is skewed to low complexity. Over residues 524-534 (TGVQSEGTWES) the composition is skewed to polar residues. Low complexity predominate over residues 599–612 (SSSSASSTGFSSSY). Residues S679, K690, 730–732 (DDL), and D743 each bind ATP. Residues K745 and R766 each contribute to the substrate site. Residues 768–776 (DMYQKMIEV) are calmodulin-binding. 793 to 800 (KPRYMQWR) is a binding site for substrate. The ATP site is built by K817 and D897. A substrate-binding site is contributed by K900.

This sequence belongs to the inositol phosphokinase (IPK) family. In terms of assembly, interacts with DMTN.

Its subcellular location is the cytoplasm. It is found in the cytoskeleton. The protein localises to the endoplasmic reticulum. The enzyme catalyses 1D-myo-inositol 1,4,5-trisphosphate + ATP = 1D-myo-inositol 1,3,4,5-tetrakisphosphate + ADP + H(+). Its activity is regulated as follows. IP3K is activated by calcium and calmodulin. Form B is much more sensitive to calcium/calmodulin than form A. Catalyzes the phosphorylation of 1D-myo-inositol 1,4,5-trisphosphate (InsP3) into 1D-myo-inositol 1,3,4,5-tetrakisphosphate and participates to the regulation of calcium homeostasis. The polypeptide is Inositol-trisphosphate 3-kinase B (Homo sapiens (Human)).